A 188-amino-acid polypeptide reads, in one-letter code: Adenine phosphoribosyltransferase (188 aa).

Belongs to the purine/pyrimidine phosphoribosyltransferase family. In terms of assembly, homodimer.

Its subcellular location is the cytoplasm. The enzyme catalyses AMP + diphosphate = 5-phospho-alpha-D-ribose 1-diphosphate + adenine. Its pathway is purine metabolism; AMP biosynthesis via salvage pathway; AMP from adenine: step 1/1. Functionally, catalyzes a salvage reaction resulting in the formation of AMP, that is energically less costly than de novo synthesis. This chain is Adenine phosphoribosyltransferase, found in Burkholderia ambifaria (strain MC40-6).